Here is a 421-residue protein sequence, read N- to C-terminus: MDKIVIKGGNKLTGEVKVEGAKNAVLPILTASLLASDKPSKLVNVPALSDVETINNVLTTLNADVTYKKDENAVVVDATKTLNEEAPYEYVSKMRASILVMGPLLARLGHAIVALPGGCAIGSRPIEQHIKGFEALGAEIHLENGNIYANAKDGLKGTSIHLDFPSVGATQNIIMAASLAKGKTLIENAAKEPEIVDLANYINEMGGRITGAGTDTITINGVESLHGVEHAIIPDRIEAGTLLIAGAITRGDIFVRGAIKEHMASLVYKLEEMGVELDYQEDGIRVRAEGDLQPVDIKTLPHPGFPTDMQSQMMALLLTANGHKVVTETVFENRFMHVAEFKRMNANINVEGRSAKLEGKSQLQGAQVKATDLRAAAALILAGLVADGKTSVTELNHLDRGYVDLHGKLKQLGAEIERIND.

Position 22–23 (22–23) interacts with phosphoenolpyruvate; the sequence is KN. Position 95 (arginine 95) interacts with UDP-N-acetyl-alpha-D-glucosamine. Cysteine 119 serves as the catalytic Proton donor. A 2-(S-cysteinyl)pyruvic acid O-phosphothioketal modification is found at cysteine 119. UDP-N-acetyl-alpha-D-glucosamine is bound by residues 124–128, aspartate 308, and valine 330; that span reads RPIEQ.

The protein belongs to the EPSP synthase family. MurA subfamily.

Its subcellular location is the cytoplasm. The enzyme catalyses phosphoenolpyruvate + UDP-N-acetyl-alpha-D-glucosamine = UDP-N-acetyl-3-O-(1-carboxyvinyl)-alpha-D-glucosamine + phosphate. The protein operates within cell wall biogenesis; peptidoglycan biosynthesis. Cell wall formation. Adds enolpyruvyl to UDP-N-acetylglucosamine. The polypeptide is UDP-N-acetylglucosamine 1-carboxyvinyltransferase 1 (Staphylococcus aureus (strain bovine RF122 / ET3-1)).